Consider the following 256-residue polypeptide: Hydroxyacylglutathione hydrolase (256 aa).

Zn(2+) contacts are provided by His56, His58, Asp60, His61, His114, Asp133, and His171.

This sequence belongs to the metallo-beta-lactamase superfamily. Glyoxalase II family. In terms of assembly, monomer. Requires Zn(2+) as cofactor.

The catalysed reaction is an S-(2-hydroxyacyl)glutathione + H2O = a 2-hydroxy carboxylate + glutathione + H(+). The protein operates within secondary metabolite metabolism; methylglyoxal degradation; (R)-lactate from methylglyoxal: step 2/2. Its function is as follows. Thiolesterase that catalyzes the hydrolysis of S-D-lactoyl-glutathione to form glutathione and D-lactic acid. The polypeptide is Hydroxyacylglutathione hydrolase (Rhodobacter capsulatus (Rhodopseudomonas capsulata)).